A 455-amino-acid polypeptide reads, in one-letter code: Bifunctional protein GlmU (455 aa).

The interval 1 to 226 is pyrophosphorylase; sequence MSLDIVILAA…PMEVQGANDR (226 aa). UDP-N-acetyl-alpha-D-glucosamine-binding positions include 8 to 11, K22, Q73, 78 to 79, 99 to 101, G136, E151, N166, and N224; these read LAAG, GT, and YGD. D101 is a Mg(2+) binding site. N224 is a binding site for Mg(2+). The tract at residues 227–247 is linker; the sequence is RQLSELERHYQLREGRRLMAQ. The interval 248–455 is N-acetyltransferase; the sequence is GVTLRDPARF…WKRPEKTKKS (208 aa). Residues R330 and K348 each coordinate UDP-N-acetyl-alpha-D-glucosamine. H360 acts as the Proton acceptor in catalysis. UDP-N-acetyl-alpha-D-glucosamine is bound by residues Y363 and N374. Acetyl-CoA-binding positions include A377, 383-384, S402, A420, and R437; that span reads NY.

It in the N-terminal section; belongs to the N-acetylglucosamine-1-phosphate uridyltransferase family. The protein in the C-terminal section; belongs to the transferase hexapeptide repeat family. As to quaternary structure, homotrimer. Mg(2+) is required as a cofactor.

The protein resides in the cytoplasm. The enzyme catalyses alpha-D-glucosamine 1-phosphate + acetyl-CoA = N-acetyl-alpha-D-glucosamine 1-phosphate + CoA + H(+). The catalysed reaction is N-acetyl-alpha-D-glucosamine 1-phosphate + UTP + H(+) = UDP-N-acetyl-alpha-D-glucosamine + diphosphate. The protein operates within nucleotide-sugar biosynthesis; UDP-N-acetyl-alpha-D-glucosamine biosynthesis; N-acetyl-alpha-D-glucosamine 1-phosphate from alpha-D-glucosamine 6-phosphate (route II): step 2/2. It functions in the pathway nucleotide-sugar biosynthesis; UDP-N-acetyl-alpha-D-glucosamine biosynthesis; UDP-N-acetyl-alpha-D-glucosamine from N-acetyl-alpha-D-glucosamine 1-phosphate: step 1/1. Its pathway is bacterial outer membrane biogenesis; LPS lipid A biosynthesis. Its function is as follows. Catalyzes the last two sequential reactions in the de novo biosynthetic pathway for UDP-N-acetylglucosamine (UDP-GlcNAc). The C-terminal domain catalyzes the transfer of acetyl group from acetyl coenzyme A to glucosamine-1-phosphate (GlcN-1-P) to produce N-acetylglucosamine-1-phosphate (GlcNAc-1-P), which is converted into UDP-GlcNAc by the transfer of uridine 5-monophosphate (from uridine 5-triphosphate), a reaction catalyzed by the N-terminal domain. The chain is Bifunctional protein GlmU from Pseudomonas putida (strain GB-1).